A 171-amino-acid polypeptide reads, in one-letter code: Large ribosomal subunit protein bL9 (171 aa).

It belongs to the bacterial ribosomal protein bL9 family.

Its function is as follows. Binds to the 23S rRNA. The chain is Large ribosomal subunit protein bL9 from Rickettsia africae (strain ESF-5).